The following is a 116-amino-acid chain: U16-barytoxin-Tl1b (116 aa).

The first 20 residues, 1-20 (MKTIIVFLSLLVLATKFGDA), serve as a signal peptide directing secretion. A propeptide spanning residues 21–74 (KEGVNQKQKKEVTQNEFREEYLNEMAAMSLVQQLEAIERALFENEAGRNSRQKR) is cleaved from the precursor. Disulfide bonds link C75/C90, C82/C95, and C89/C110.

The protein belongs to the neurotoxin 14 (magi-1) family. 06 (ICK-Trit) subfamily. Expressed by the venom gland.

The protein resides in the secreted. Ion channel inhibitor. The protein is U16-barytoxin-Tl1b of Trittame loki (Brush-footed trapdoor spider).